The primary structure comprises 171 residues: Large ribosomal subunit protein uL10 (171 aa).

It belongs to the universal ribosomal protein uL10 family. Part of the ribosomal stalk of the 50S ribosomal subunit. The N-terminus interacts with L11 and the large rRNA to form the base of the stalk. The C-terminus forms an elongated spine to which L12 dimers bind in a sequential fashion forming a multimeric L10(L12)X complex.

Its function is as follows. Forms part of the ribosomal stalk, playing a central role in the interaction of the ribosome with GTP-bound translation factors. This is Large ribosomal subunit protein uL10 from Nitrosomonas eutropha (strain DSM 101675 / C91 / Nm57).